Reading from the N-terminus, the 265-residue chain is tRNA pseudouridine synthase A (265 aa).

Asp-52 acts as the Nucleophile in catalysis. Tyr-110 provides a ligand contact to substrate. Residues 244 to 265 are disordered; sequence FYRDGPPARTPGGTTDAEEDEG.

It belongs to the tRNA pseudouridine synthase TruA family. As to quaternary structure, homodimer.

The catalysed reaction is uridine(38/39/40) in tRNA = pseudouridine(38/39/40) in tRNA. Functionally, formation of pseudouridine at positions 38, 39 and 40 in the anticodon stem and loop of transfer RNAs. This Myxococcus xanthus protein is tRNA pseudouridine synthase A.